The sequence spans 293 residues: Transcription elongation factor S-II (293 aa).

Residues 4–81 (ADIRSAKAAL…KKWKADVSKG (78 aa)) enclose the TFIIS N-terminal domain. The segment at 81–123 (GRPLKTTTTTSSTPSKHADVGSQAQKQVQKQSSSGQRTFKSDN) is disordered. Residues 100 to 116 (VGSQAQKQVQKQSSSGQ) show a composition bias toward low complexity. The 116-residue stretch at 133–248 (IRNNCIGLMY…HAQGAKPQKA (116 aa)) folds into the TFIIS central domain. The TFIIS-type zinc finger occupies 251-291 (DLFTCGKCKQKKVSYYQMQTRSADEPMTTFCECTVCGNRWK). 4 residues coordinate Zn(2+): cysteine 255, cysteine 258, cysteine 283, and cysteine 286.

Belongs to the TFS-II family.

Its subcellular location is the nucleus. Necessary for efficient RNA polymerase II transcription elongation past template-encoded arresting sites. The arresting sites in DNA have the property of trapping a certain fraction of elongating RNA polymerases that pass through, resulting in locked ternary complexes. Cleavage of the nascent transcript by S-II allows the resumption of elongation from the new 3'-terminus. This is Transcription elongation factor S-II (tfs1) from Schizosaccharomyces pombe (strain 972 / ATCC 24843) (Fission yeast).